The sequence spans 102 residues: Small ribosomal subunit protein uS10 (102 aa).

This sequence belongs to the universal ribosomal protein uS10 family. Part of the 30S ribosomal subunit.

Functionally, involved in the binding of tRNA to the ribosomes. In Streptococcus thermophilus (strain ATCC BAA-491 / LMD-9), this protein is Small ribosomal subunit protein uS10.